The primary structure comprises 231 residues: Translin-associated protein X homolog (231 aa).

It belongs to the translin family.

The protein resides in the cytoplasm. It is found in the nucleus. In Schizosaccharomyces pombe (strain 972 / ATCC 24843) (Fission yeast), this protein is Translin-associated protein X homolog.